Reading from the N-terminus, the 150-residue chain is 3-hydroxyacyl-[acyl-carrier-protein] dehydratase FabZ (150 aa).

Histidine 52 is a catalytic residue.

The protein belongs to the thioester dehydratase family. FabZ subfamily.

It localises to the cytoplasm. It carries out the reaction a (3R)-hydroxyacyl-[ACP] = a (2E)-enoyl-[ACP] + H2O. In terms of biological role, involved in unsaturated fatty acids biosynthesis. Catalyzes the dehydration of short chain beta-hydroxyacyl-ACPs and long chain saturated and unsaturated beta-hydroxyacyl-ACPs. The polypeptide is 3-hydroxyacyl-[acyl-carrier-protein] dehydratase FabZ (Variovorax paradoxus (strain S110)).